A 769-amino-acid chain; its full sequence is Trehalose 6-phosphate phosphorylase (769 aa).

342 to 343 (WD) is a binding site for substrate. The active-site Proton donor is the glutamate 480. 589-590 (KQ) provides a ligand contact to substrate.

This sequence belongs to the glycosyl hydrolase 65 family. Monomer.

The catalysed reaction is alpha,alpha-trehalose 6-phosphate + phosphate = beta-D-glucose 1-phosphate + D-glucose 6-phosphate. Functionally, catalyzes the conversion of trehalose 6-phosphate into glucose 1-phosphate and glucose 6-phosphate. In Lactococcus lactis subsp. lactis (strain IL1403) (Streptococcus lactis), this protein is Trehalose 6-phosphate phosphorylase (trePP).